A 186-amino-acid chain; its full sequence is Alkyl hydroperoxide reductase AhpD (186 aa).

Cys-131 (proton donor) is an active-site residue. Cys-131 and Cys-134 are oxidised to a cystine. Residue Cys-134 is the Cysteine sulfenic acid (-SOH) intermediate of the active site.

Belongs to the AhpD family.

It carries out the reaction N(6)-[(R)-dihydrolipoyl]-L-lysyl-[lipoyl-carrier protein] + a hydroperoxide = N(6)-[(R)-lipoyl]-L-lysyl-[lipoyl-carrier protein] + an alcohol + H2O. In terms of biological role, antioxidant protein with alkyl hydroperoxidase activity. Required for the reduction of the AhpC active site cysteine residues and for the regeneration of the AhpC enzyme activity. The sequence is that of Alkyl hydroperoxide reductase AhpD from Rhodospirillum centenum (strain ATCC 51521 / SW).